The primary structure comprises 350 residues: Ferrochelatase (350 aa).

Fe cation-binding residues include H220 and E301.

Belongs to the ferrochelatase family.

Its subcellular location is the cytoplasm. The enzyme catalyses heme b + 2 H(+) = protoporphyrin IX + Fe(2+). It participates in porphyrin-containing compound metabolism; protoheme biosynthesis; protoheme from protoporphyrin-IX: step 1/1. Its function is as follows. Catalyzes the ferrous insertion into protoporphyrin IX. This chain is Ferrochelatase, found in Brucella anthropi (strain ATCC 49188 / DSM 6882 / CCUG 24695 / JCM 21032 / LMG 3331 / NBRC 15819 / NCTC 12168 / Alc 37) (Ochrobactrum anthropi).